The chain runs to 616 residues: MAHEVHRIKPKLGRTQIFWVFLAFRVLNAVLTRTFFQADEFWQALEPAHWKAFKYGELTWEWKFGVRSYLFPMIFELTYRLVSLSSILLHYALLLLSTIGSDLLILLLPKYELSWQVAEDLKRLPFDVTRSFEYYGVIYAPKIVMAVLASIGEYYIVRFVQKLYLLTLDKRNEKEEEERRSGLSEITKFALLLSLTNFFNCFFITRTFINSFEMILTSIALYYWDWTGGQMIKESSFTKSLIFAFLACLQRPSSGLIWVIPSISLILNLVGKKQYHLLFITFSKVLRSFFLVFTANAIIDMYFYEKVTFPFFRFLKFNFTTPLSKFYGVAPWHFHFFQSLPIVLGASIPAFAFGLFFPLSKRSFPKKYLNPFFQVKLTILLNLLVYSTLPHKEFRFIFPLQPLFILISSFGLLRLDRDYWKRLSGLKSLLWLVPFVSVFIALLLDTFHESGSIEVMKFLHEEPEIDSLGFIMPCHSTPGQSYLHRSDIQDLWSITCNPPLHLLGDPEAYSKLETYMDESDHLYDDISAFIYKNFPPPFRKDLRSPGKTYSHEWPTYLVVFEHMENAFLKDFLKDSSYIEYNRFFNSLAHWDSRRSGDIIIYYKLPFDYSDIPAADI.

The Cytoplasmic segment spans residues 1–16; it reads MAHEVHRIKPKLGRTQ. The chain crosses the membrane as a helical span at residues 17 to 37; sequence IFWVFLAFRVLNAVLTRTFFQ. Residues 38 to 86 lie on the Lumenal side of the membrane; the sequence is ADEFWQALEPAHWKAFKYGELTWEWKFGVRSYLFPMIFELTYRLVSLSS. Residues 87-107 form a helical membrane-spanning segment; sequence ILLHYALLLLSTIGSDLLILL. The Cytoplasmic portion of the chain corresponds to 108–136; the sequence is LPKYELSWQVAEDLKRLPFDVTRSFEYYG. Residues 137–157 traverse the membrane as a helical segment; the sequence is VIYAPKIVMAVLASIGEYYIV. At 158–188 the chain is on the lumenal side; that stretch reads RFVQKLYLLTLDKRNEKEEEERRSGLSEITK. Residues 189-209 traverse the membrane as a helical segment; the sequence is FALLLSLTNFFNCFFITRTFI. The Cytoplasmic portion of the chain corresponds to 210 to 240; that stretch reads NSFEMILTSIALYYWDWTGGQMIKESSFTKS. Residues 241–261 traverse the membrane as a helical segment; sequence LIFAFLACLQRPSSGLIWVIP. Over 262–278 the chain is Lumenal; the sequence is SISLILNLVGKKQYHLL. Residues 279-299 form a helical membrane-spanning segment; it reads FITFSKVLRSFFLVFTANAII. Residues 300-338 lie on the Cytoplasmic side of the membrane; it reads DMYFYEKVTFPFFRFLKFNFTTPLSKFYGVAPWHFHFFQ. A helical membrane pass occupies residues 339–359; it reads SLPIVLGASIPAFAFGLFFPL. At 360–392 the chain is on the lumenal side; sequence SKRSFPKKYLNPFFQVKLTILLNLLVYSTLPHK. A helical transmembrane segment spans residues 393–413; that stretch reads EFRFIFPLQPLFILISSFGLL. The Cytoplasmic segment spans residues 414 to 423; that stretch reads RLDRDYWKRL. Residues 424-444 traverse the membrane as a helical segment; sequence SGLKSLLWLVPFVSVFIALLL. The Lumenal portion of the chain corresponds to 445 to 616; sequence DTFHESGSIE…DYSDIPAADI (172 aa).

It belongs to the glycosyltransferase 22 family. PIGB subfamily.

The protein localises to the endoplasmic reticulum membrane. The protein operates within glycolipid biosynthesis; glycosylphosphatidylinositol-anchor biosynthesis. Functionally, mannosyltransferase involved in glycosylphosphatidylinositol-anchor biosynthesis. Transfers the third mannose to Man2-GlcN-acyl-PI during GPI precursor assembly. This chain is GPI mannosyltransferase 3 (GPI10), found in Saccharomyces cerevisiae (strain ATCC 204508 / S288c) (Baker's yeast).